We begin with the raw amino-acid sequence, 742 residues long: Conidiogenone synthase (742 aa).

The segment at Met1–Val332 is terpene cyclase. Asp97 contacts Mg(2+). Residues Asp97, Arg190 to Asp193, Asn234, Ser238 to Glu242, and Arg328 to Tyr329 each bind substrate. Positions Asp97 to Asp101 match the DDXXD 1 motif. Residues Asn234 to Glu242 carry the NSE/DTE motif. The prenyltransferase stretch occupies residues Glu333 to Lys742. The isopentenyl diphosphate site is built by Lys414, Arg417, and His446. Positions 453 and 457 each coordinate Mg(2+). The DDXXD 2 motif lies at Asp453–Asp457. Residue Arg462 participates in dimethylallyl diphosphate binding. An isopentenyl diphosphate-binding site is contributed by Arg463. Dimethylallyl diphosphate contacts are provided by Lys539, Thr540, Gln575, Asn582, Lys592, and Lys602. The disordered stretch occupies residues Glu701–Gly724.

The protein in the N-terminal section; belongs to the terpene synthase family. It in the C-terminal section; belongs to the FPP/GGPP synthase family. In terms of assembly, hexamer. It depends on Mg(2+) as a cofactor.

The catalysed reaction is isopentenyl diphosphate + (2E,6E)-farnesyl diphosphate = (2E,6E,10E)-geranylgeranyl diphosphate + diphosphate. It participates in secondary metabolite biosynthesis; terpenoid biosynthesis. In terms of biological role, bifunctional terpene synthase; part of the gene cluster that mediates the biosynthesis of conidiogenone, a diterpene known to induce the conidiation. The bifunctional terpene synthase PrDS converts isopentenyl diphosphate (IPP) and dimethylallyl diphosphate (DMAPP) into deoxyconidiogenol. The C-terminal prenyltransferase (PT) domain of PrDS catalyzes formation of GGPP, whereas the N-terminal terpene cyclase (TC) domain catalyzes the cyclization of GGPP into deoxyconidiogenol. The cytochrome P450 monooxygenase PrP450 then catalyzes two rounds of oxidation to furnish conidiogenone. This is Conidiogenone synthase from Penicillium roqueforti (strain FM164).